Consider the following 214-residue polypeptide: 3-isopropylmalate dehydratase small subunit (214 aa).

Belongs to the LeuD family. LeuD type 1 subfamily. Heterodimer of LeuC and LeuD.

It catalyses the reaction (2R,3S)-3-isopropylmalate = (2S)-2-isopropylmalate. It functions in the pathway amino-acid biosynthesis; L-leucine biosynthesis; L-leucine from 3-methyl-2-oxobutanoate: step 2/4. Catalyzes the isomerization between 2-isopropylmalate and 3-isopropylmalate, via the formation of 2-isopropylmaleate. This chain is 3-isopropylmalate dehydratase small subunit, found in Pseudomonas putida (strain GB-1).